We begin with the raw amino-acid sequence, 508 residues long: Glycerol kinase (508 aa).

Thr-14 provides a ligand contact to ADP. The ATP site is built by Thr-14, Thr-15, and Ser-16. Position 14 (Thr-14) interacts with sn-glycerol 3-phosphate. Arg-18 provides a ligand contact to ADP. 4 residues coordinate sn-glycerol 3-phosphate: Arg-84, Glu-85, Tyr-136, and Asp-245. Glycerol-binding residues include Arg-84, Glu-85, Tyr-136, Asp-245, and Gln-246. The ADP site is built by Thr-267 and Gly-314. ATP-binding residues include Thr-267, Gly-314, and Gln-318. Asn-419 is an ADP binding site.

The protein belongs to the FGGY kinase family.

The catalysed reaction is glycerol + ATP = sn-glycerol 3-phosphate + ADP + H(+). The protein operates within polyol metabolism; glycerol degradation via glycerol kinase pathway; sn-glycerol 3-phosphate from glycerol: step 1/1. With respect to regulation, inhibited by fructose 1,6-bisphosphate (FBP). Key enzyme in the regulation of glycerol uptake and metabolism. Catalyzes the phosphorylation of glycerol to yield sn-glycerol 3-phosphate. The protein is Glycerol kinase of Bordetella pertussis (strain Tohama I / ATCC BAA-589 / NCTC 13251).